The sequence spans 317 residues: L-lactate dehydrogenase (317 aa).

NAD(+) contacts are provided by V16, D37, and Y68. Substrate is bound by residues Q85, R91, 123-126 (NPCD), and 151-154 (DSAR). 121–123 (ASN) contacts NAD(+). The Proton acceptor role is filled by H178. Y222 is modified (phosphotyrosine). Substrate is bound at residue T231.

The protein belongs to the LDH/MDH superfamily. LDH family. Homotetramer.

The protein resides in the cytoplasm. It catalyses the reaction (S)-lactate + NAD(+) = pyruvate + NADH + H(+). It functions in the pathway fermentation; pyruvate fermentation to lactate; (S)-lactate from pyruvate: step 1/1. Its function is as follows. Catalyzes the conversion of lactate to pyruvate. This Mesoplasma florum (strain ATCC 33453 / NBRC 100688 / NCTC 11704 / L1) (Acholeplasma florum) protein is L-lactate dehydrogenase.